We begin with the raw amino-acid sequence, 579 residues long: MISNSVIQIGIFLVVLMACVVPLGRYMAKVYGENPPLQGFFGPIERLIYRLLGIDAKSEMHWKHYALALLGFNAMGMLLLYGLQRMQAWLPLNPQQLPAVSADSAFNTAASFVSNTNWQGYAGETTMSYLTQMLGLTVQNFVSAATGMAVLIGLIRGIARRSTSTIGNFWVDLTRSTIYILLPLALVLSVTLVSQGVVQTFSPSQTVELIQPIVNADGTTISQQTIALGPAASQIAIKQLGTNGGGFFNVNSAHPLENPTPLSNFLELLSILLIPAALCYTFGLMVGDKRQGWAILATMTIILLGFTVLAVSAEQAGNPLYQKLGVDDQASALQAGGNLEGKETRFGIVNSALWATVTTAASNGSVNSMHDSYTPLGGLAPMVLMQLGEVVFGGVGSGLYGMLIFAIIAVFVAGLMVGRTPEYLGKKIEAFEMKMAALIILIPCVMTLLITAIAVSSESGRATVFNSGAHGFSEVLYAATSAANNNGSAFAGLGANTPFYNTWLGIAMLVSRFWLIVPTLAIAGSLAGKKLIPQSAGTLPTHTPLFVSLLIGVVLIVGALTFIPALALGPIVEHLLLSL.

10 helical membrane-spanning segments follow: residues 1–21, 64–84, 135–155, 178–198, 265–285, 293–313, 398–418, 435–455, 503–523, and 549–569; these read MISNSVIQIGIFLVVLMACVV, HYALALLGFNAMGMLLLYGLQ, GLTVQNFVSAATGMAVLIGLI, IYILLPLALVLSVTLVSQGVV, FLELLSILLIPAALCYTFGLM, WAILATMTIILLGFTVLAVSA, GLYGMLIFAIIAVFVAGLMVG, MAALIILIPCVMTLLITAIAV, WLGIAMLVSRFWLIVPTLAIA, and LLIGVVLIVGALTFIPALALG.

It belongs to the KdpA family. As to quaternary structure, the system is composed of three essential subunits: KdpA, KdpB and KdpC.

It localises to the cell membrane. In terms of biological role, part of the high-affinity ATP-driven potassium transport (or Kdp) system, which catalyzes the hydrolysis of ATP coupled with the electrogenic transport of potassium into the cytoplasm. This subunit binds the extracellular potassium ions and delivers the ions to the membrane domain of KdpB through an intramembrane tunnel. The chain is Potassium-transporting ATPase potassium-binding subunit from Herpetosiphon aurantiacus (strain ATCC 23779 / DSM 785 / 114-95).